The following is a 162-amino-acid chain: CD-NTase-associated protein 7 (162 aa).

The disordered stretch occupies residues 138-162; it reads HSGLTQSGGREYSSNGYGMQRKDYN. Polar residues predominate over residues 139-154; that stretch reads SGLTQSGGREYSSNGY.

The protein belongs to the HORMA family. HORMA1 subfamily. As to quaternary structure, forms complexes with CdnC with 1:1 and 2:2 stoichimetry, and a 1:1:6 CdnC:Cap7:Cap6 complex.

Sensor protein of a CBASS antivirus system. CBASS (cyclic oligonucleotide-based antiphage signaling system) provides immunity against bacteriophage. The CD-NTase protein synthesizes cyclic nucleotides in response to infection; these serve as specific second messenger signals. The signals activate a diverse range of effectors, leading to bacterial cell death and thus abortive phage infection. A type III CBASS system. Expression of this CBASS system (Cap18-Cap6-Cap7-CdnC-CapW-Cap17) in a susceptible E.coli (strain MG1655) confers resistance to bacteriophage P1. The sensor protein for this CBASS system. Binds to a closure peptide, which allows it to activate CdnC for second messenger synthesis. This is CD-NTase-associated protein 7 from Escherichia coli (strain KTE188).